The chain runs to 838 residues: DNA gyrase subunit A (838 aa).

The Topo IIA-type catalytic domain maps to 41-510 (LPEVRDGLKP…ADGDVSDEDL (470 aa)). Y129 serves as the catalytic O-(5'-phospho-DNA)-tyrosine intermediate. The GyrA-box motif lies at 537-543 (QKRGGKG).

The protein belongs to the type II topoisomerase GyrA/ParC subunit family. In terms of assembly, heterotetramer, composed of two GyrA and two GyrB chains. In the heterotetramer, GyrA contains the active site tyrosine that forms a transient covalent intermediate with DNA, while GyrB binds cofactors and catalyzes ATP hydrolysis. Mg(2+) serves as cofactor.

It localises to the cytoplasm. It catalyses the reaction ATP-dependent breakage, passage and rejoining of double-stranded DNA.. Its activity is regulated as follows. DNA supercoiling is inhibited by EDTA, novobiocin, coumermycin and ciprofloxacin. A type II topoisomerase that negatively supercoils closed circular double-stranded (ds) DNA in an ATP-dependent manner to modulate DNA topology and maintain chromosomes in an underwound state. Also catalyzes the interconversion of other topological isomers of double-stranded DNA rings, including catenanes and knotted rings. Relaxes negatively supercoiled DNA in an ATP-independent manner. A linear reaction intermediate can be trapped in the presence of the antibiotic ciprofloxacin. Negative supercoiling favors strand separation, and DNA replication, transcription, recombination and repair, all of which involve strand separation. Type II topoisomerases break and join 2 DNA strands simultaneously in an ATP-dependent manner. The polypeptide is DNA gyrase subunit A (Mycobacterium bovis (strain BCG / Pasteur 1173P2)).